The primary structure comprises 431 residues: Hydroxylamine reductase (431 aa).

Residues Cys5, Cys8, Cys17, and Cys23 each coordinate [4Fe-4S] cluster. 8 residues coordinate hybrid [4Fe-2O-2S] cluster: His131, Glu155, Cys199, Cys286, Cys314, Cys339, Glu373, and Lys375. Cys286 is subject to Cysteine persulfide.

Belongs to the HCP family. Requires [4Fe-4S] cluster as cofactor. Hybrid [4Fe-2O-2S] cluster serves as cofactor.

It is found in the cytoplasm. The catalysed reaction is A + NH4(+) + H2O = hydroxylamine + AH2 + H(+). Functionally, catalyzes the reduction of hydroxylamine to form NH(3) and H(2)O. This Thermotoga maritima (strain ATCC 43589 / DSM 3109 / JCM 10099 / NBRC 100826 / MSB8) protein is Hydroxylamine reductase.